The primary structure comprises 181 residues: Proteinase inhibitor A (181 aa).

The N-terminal stretch at 1-24 (MAASNALLLISGVLLISLAVLCHG) is a signal peptide. 3 disulfide bridges follow: C67/C113, C134/C143, and C136/C139.

This sequence belongs to the protease inhibitor I3 (leguminous Kunitz-type inhibitor) family.

It localises to the secreted. Its function is as follows. Possesses two reactive sites. Inhibits an equimolar amount of trypsin and chymotrypsin simultaneously, and inhibits kallikrein weakly. This chain is Proteinase inhibitor A, found in Sagittaria sagittifolia (Arrowhead).